The primary structure comprises 785 residues: Protein kintoun (785 aa).

2 stretches are compositionally biased toward basic and acidic residues: residues 622–638 (EHNE…RDTS) and 662–679 (HNIE…KEPK). 2 disordered regions span residues 622–698 (EHNE…DSHL) and 719–749 (KSSV…ASSN). The segment covering 681 to 695 (TSCTAESTSGQQPND) has biased composition (polar residues). Acidic residues predominate over residues 728–737 (SDLDEDDMPD).

The protein belongs to the PIH1 family. Kintoun subfamily.

It localises to the cytoplasm. The protein localises to the dynein axonemal particle. Required for cytoplasmic pre-assembly of axonemal dyneins, thereby playing a central role in motility in cilia and flagella. Involved in pre-assembly of dynein arm complexes in the cytoplasm before intraflagellar transport loads them for the ciliary compartment. The polypeptide is Protein kintoun (Xenopus tropicalis (Western clawed frog)).